The sequence spans 318 residues: Putative HTH-type transcriptional regulatory protein TK0539 (318 aa).

In terms of domain architecture, HTH cro/C1-type spans 131–189 (LRELREKHGYSVNELAQLLGVSRKSLLNYERGEQAVSLDVAIQLEEIFDEALAEPIDIL). Residues 142–161 (VNELAQLLGVSRKSLLNYER) constitute a DNA-binding region (H-T-H motif).

This Thermococcus kodakarensis (strain ATCC BAA-918 / JCM 12380 / KOD1) (Pyrococcus kodakaraensis (strain KOD1)) protein is Putative HTH-type transcriptional regulatory protein TK0539.